Reading from the N-terminus, the 209-residue chain is Uracil phosphoribosyltransferase (209 aa).

Residues arginine 79, arginine 104, and 131-139 (DPMLATGGS) each bind 5-phospho-alpha-D-ribose 1-diphosphate. Residues isoleucine 194 and 199–201 (GDA) each bind uracil. Aspartate 200 serves as a coordination point for 5-phospho-alpha-D-ribose 1-diphosphate.

Belongs to the UPRTase family. Requires Mg(2+) as cofactor.

The enzyme catalyses UMP + diphosphate = 5-phospho-alpha-D-ribose 1-diphosphate + uracil. The protein operates within pyrimidine metabolism; UMP biosynthesis via salvage pathway; UMP from uracil: step 1/1. With respect to regulation, allosterically activated by GTP. Its function is as follows. Catalyzes the conversion of uracil and 5-phospho-alpha-D-ribose 1-diphosphate (PRPP) to UMP and diphosphate. This Streptococcus salivarius protein is Uracil phosphoribosyltransferase.